Reading from the N-terminus, the 1169-residue chain is Protein MBD-R2 (1169 aa).

The THAP-type zinc finger occupies 5 to 59; sequence CCVANCPSTSRLLEHNGVTYHSFPLDPIIRAIWIKNSRISLERQITKSVLVCSRH. Disordered stretches follow at residues 99–122, 140–211, and 347–394; these read RALQHASVEGTTETPGNAQSSTND, SAER…KYSN, and AEEG…CAPQ. A compositionally biased stretch (polar residues) spans 107 to 122; sequence EGTTETPGNAQSSTND. The span at 140-160 shows a compositional bias: basic and acidic residues; the sequence is SAERKATEEGKTGKAADDVKN. The segment covering 190 to 202 has biased composition (low complexity); sequence PAPGSASSSNSPL. Polar residues predominate over residues 353–363; it reads KSPTPVGTPVS. Positions 445–514 constitute an MBD domain; it reads KPTVIVQDWR…DVYDFSIHRR (70 aa). The segment at 527-565 is disordered; the sequence is GYNPQPPPKPRPMDVSMNSTLDQSITSQHSLPSTPMPVK. The span at 542–559 shows a compositional bias: polar residues; sequence SMNSTLDQSITSQHSLPS. Residues 640-665 form a C2H2-type zinc finger; sequence YVCPREDCAKTYRKEDFLLIHIRHYH. The tract at residues 714–890 is disordered; the sequence is QDLQQSRSFK…INAALAPPPA (177 aa). Low complexity predominate over residues 726 to 742; that stretch reads SVSATATSSTPSDITPT. Residues 774 to 784 show a composition bias toward polar residues; it reads PTQSFNPSLSR. The segment covering 798 to 810 has biased composition (basic residues); that stretch reads SGSRKSNRQRSQR. Polar residues-rich tracts occupy residues 853–862 and 869–881; these read AATTPISSID and SVSTPSSNDQTDI.

As to quaternary structure, component of the non-specific lethal (NLS) histone acetyltransferase complex at least composed of mof, nls1, dgt1/NSL2, Rcd1/NSL3, Rcd5/MCRS2, MBD-R2 and wds.

The protein resides in the nucleus. It localises to the chromosome. Functionally, component of the non-specific lethal (NLS) complex, a multiprotein complex that promotes expression of housekeeping genes on X chromosome and autosomes. This is Protein MBD-R2 from Drosophila melanogaster (Fruit fly).